The sequence spans 552 residues: Urocanate hydratase (552 aa).

Residues 50–51 (GG), Gln128, 174–176 (GMG), Glu194, Arg199, 261–265 (QTSAH), 271–272 (YI), and Tyr320 each bind NAD(+). Cys408 is a catalytic residue. Residue Gly490 coordinates NAD(+).

It belongs to the urocanase family. The cofactor is NAD(+).

It localises to the cytoplasm. The catalysed reaction is 4-imidazolone-5-propanoate = trans-urocanate + H2O. The protein operates within amino-acid degradation; L-histidine degradation into L-glutamate; N-formimidoyl-L-glutamate from L-histidine: step 2/3. In terms of biological role, catalyzes the conversion of urocanate to 4-imidazolone-5-propionate. This Bdellovibrio bacteriovorus (strain ATCC 15356 / DSM 50701 / NCIMB 9529 / HD100) protein is Urocanate hydratase.